The chain runs to 232 residues: Charged multivesicular body protein 4c (232 aa).

Disordered regions lie at residues 1 to 23 and 177 to 232; these read MSKL…PSAQ and NKKM…AWAT. The tract at residues 1–153 is intramolecular interaction with C-terminus; the sequence is MSKLGKFFKG…EISEAFSQRV (153 aa). Coiled-coil stretches lie at residues 21–45 and 125–185; these read SAQE…YLEN and LNKI…SLEL. An intramolecular interaction with N-terminus region spans residues 154–232; sequence QFADGFDEAE…DFKQLAAWAT (79 aa). Position 210 is a phosphoserine; by AURKB (Ser210).

The protein belongs to the SNF7 family. In terms of assembly, probable core component of the endosomal sorting required for transport complex III (ESCRT-III). ESCRT-III components are thought to multimerize to form a flat lattice on the perimeter membrane of the endosome. Several assembly forms of ESCRT-III may exist that interact and act sequentially. Self-associates. Interacts with CHMP2A. Interacts with CHMP4A. Interacts with CHMP4B. Interacts with CHMP6. Interacts with VPS4A. Interacts with PDCD6IP; the interaction is direct. In terms of processing, phosphorylated at Ser-210 by AURKB during cytokinesis: together with ZFYVE19/ANCHR, phosphorylated CHMP4C retains abscission-competent VPS4 (VPS4A and/or VPS4B) at the midbody ring until abscission checkpoint signaling is terminated at late cytokinesis.

The protein localises to the cytoplasm. The protein resides in the cytosol. It is found in the late endosome membrane. It localises to the midbody. Its subcellular location is the midbody ring. Its function is as follows. Probable core component of the endosomal sorting required for transport complex III (ESCRT-III) which is involved in multivesicular bodies (MVBs) formation and sorting of endosomal cargo proteins into MVBs. MVBs contain intraluminal vesicles (ILVs) that are generated by invagination and scission from the limiting membrane of the endosome and mostly are delivered to lysosomes enabling degradation of membrane proteins, such as stimulated growth factor receptors, lysosomal enzymes and lipids. The MVB pathway appears to require the sequential function of ESCRT-O, -I,-II and -III complexes. ESCRT-III proteins mostly dissociate from the invaginating membrane before the ILV is released. The ESCRT machinery also functions in topologically equivalent membrane fission events, such as the terminal stages of cytokinesis. Key component of the cytokinesis checkpoint, a process required to delay abscission to prevent both premature resolution of intercellular chromosome bridges and accumulation of DNA damage: upon phosphorylation by AURKB, together with ZFYVE19/ANCHR, retains abscission-competent VPS4 (VPS4A and/or VPS4B) at the midbody ring until abscission checkpoint signaling is terminated at late cytokinesis. Deactivation of AURKB results in dephosphorylation of CHMP4C followed by its dissociation from ANCHR and VPS4 and subsequent abscission. ESCRT-III proteins are believed to mediate the necessary vesicle extrusion and/or membrane fission activities, possibly in conjunction with the AAA ATPase VPS4. CHMP4A/B/C are required for the exosomal release of SDCBP, CD63 and syndecan. This is Charged multivesicular body protein 4c (Chmp4c) from Mus musculus (Mouse).